A 204-amino-acid polypeptide reads, in one-letter code: CASP-like protein 2U1 (204 aa).

The Cytoplasmic segment spans residues Met-1 to Lys-36. The helical transmembrane segment at Gly-37 to Leu-57 threads the bilayer. The Extracellular segment spans residues Lys-58–Ser-84. Asn-77 is a glycosylation site (N-linked (GlcNAc...) asparagine). A helical membrane pass occupies residues Leu-85–Leu-105. Residues Ser-106 to Thr-117 lie on the Cytoplasmic side of the membrane. Residues Val-118 to Ala-138 form a helical membrane-spanning segment. The Extracellular segment spans residues Ala-139–His-170. A helical transmembrane segment spans residues Phe-171–Ile-191. The Cytoplasmic portion of the chain corresponds to Ser-192 to Lys-204.

It belongs to the Casparian strip membrane proteins (CASP) family. Homodimer and heterodimers.

The protein localises to the cell membrane. The sequence is that of CASP-like protein 2U1 from Selaginella moellendorffii (Spikemoss).